A 340-amino-acid polypeptide reads, in one-letter code: Flavonoid 7-O-methyltransferase 1 (340 aa).

Aspartate 207 is a binding site for S-adenosyl-L-methionine. Catalysis depends on histidine 245, which acts as the Proton acceptor.

The protein belongs to the class I-like SAM-binding methyltransferase superfamily. Cation-independent O-methyltransferase family. In terms of assembly, homodimer. As to expression, expressed in leaves.

The enzyme catalyses (2S)-naringenin + S-adenosyl-L-methionine = (2S)-sakuranetin + S-adenosyl-L-homocysteine + H(+). It carries out the reaction scutellarein + S-adenosyl-L-methionine = scutellarein 7-methyl ether + S-adenosyl-L-homocysteine. It catalyses the reaction apigenin + S-adenosyl-L-methionine = genkwanin + S-adenosyl-L-homocysteine + H(+). The catalysed reaction is luteolin + S-adenosyl-L-methionine = luteolin 7-methyl ether + S-adenosyl-L-homocysteine + H(+). The enzyme catalyses chrysoeriol + S-adenosyl-L-methionine = velutin + S-adenosyl-L-homocysteine. It carries out the reaction diosmetin + S-adenosyl-L-methionine = luteolin 4',7-dimethyl ether + S-adenosyl-L-homocysteine. It catalyses the reaction acacetin + S-adenosyl-L-methionine = apigenin 4',7-dimethyl ether + S-adenosyl-L-homocysteine. The catalysed reaction is scutellarein 4'-methyl ether + S-adenosyl-L-methionine = ladanein + S-adenosyl-L-homocysteine. It participates in flavonoid metabolism. Functionally, flavonoid 7-O-methyltransferase involved in the biosynthesis of polymethoxylated flavonoids natural products such as nevadensin and salvigenin, aroma compounds which contribute to the flavor of sweet basil, and exhibit pharmacological activities such as anti-allergic, anti-oxidant, antibacterial, anti-proliferative, and anti-inflammatory effects. Catalyzes S-adenosylmethionine-dependent regioselective 7-O-methylation of flavonoids; active on various hydroxylated flavonoid substrates, including apigenin (API) and luteolin (LUT), and, with a lower efficiency, scutellarein (SCU), naringenin (NAR), chrysoeriol (CHRYS), diosmetin (DIOS), acacetin (ACA) and scutellarein-7-methyl ether (SCU7Me). The protein is Flavonoid 7-O-methyltransferase 1 of Ocimum basilicum (Sweet basil).